Here is a 153-residue protein sequence, read N- to C-terminus: Transcriptional repressor NrdR (153 aa).

Residues 3 to 34 (CPFCHNQDTRVIDSRAAEEGTAIRRRRSCPAC) fold into a zinc finger. In terms of domain architecture, ATP-cone spans 46 to 136 (LMVTKRSGAT…VYRSFESLED (91 aa)).

This sequence belongs to the NrdR family. The cofactor is Zn(2+).

Functionally, negatively regulates transcription of bacterial ribonucleotide reductase nrd genes and operons by binding to NrdR-boxes. In Thermobifida fusca (strain YX), this protein is Transcriptional repressor NrdR.